A 185-amino-acid polypeptide reads, in one-letter code: RRM domain-containing protein ECU09_1470 (185 aa).

RRM domains are found at residues 8–87 (NQLA…YAKR) and 101–170 (KKVY…PAYE).

This Encephalitozoon cuniculi (strain GB-M1) (Microsporidian parasite) protein is RRM domain-containing protein ECU09_1470.